The chain runs to 396 residues: Cystathionine beta-lyase (396 aa).

Position 214 is an N6-(pyridoxal phosphate)lysine (Lys-214).

The protein belongs to the trans-sulfuration enzymes family. As to quaternary structure, homodimer. Pyridoxal 5'-phosphate is required as a cofactor.

Its subcellular location is the cytoplasm. It carries out the reaction L,L-cystathionine + H2O = L-homocysteine + pyruvate + NH4(+). The catalysed reaction is an S-substituted L-cysteine + H2O = a thiol + pyruvate + NH4(+). The protein operates within amino-acid biosynthesis; L-methionine biosynthesis via de novo pathway; L-homocysteine from L-cystathionine: step 1/1. In terms of biological role, catalyzes the cleavage of cystathionine to homocysteine, pyruvate and ammonia during methionine biosynthesis. Also has cytotoxic activity toward osteogenic, osteosarcoma and tracheal cells, in vitro. The chemical basis for cell toxicity might be the formation and subsequent transfer of sulfane-sulfur to proteins, derived via beta-cystathionase cleavage of L-cystine. In Bordetella avium, this protein is Cystathionine beta-lyase (metC).